The primary structure comprises 84 residues: Hepcidin (84 aa).

The signal sequence occupies residues 1–24 (MALSSQIWAACLLLLLLLASLTSG). A propeptide spanning residues 25-54 (SVFPQQTGQLAELQPQDRAGARAGWTPMLQ) is cleaved from the precursor. 3 disulfides stabilise this stretch: C69–C72, C70–C78, and C73–C81.

This sequence belongs to the hepcidin family. Interacts with SLC40A1; this interaction promotes SLC40A1 rapid ubiquitination.

The protein localises to the secreted. Its function is as follows. Liver-produced hormone that constitutes the main circulating regulator of iron absorption and distribution across tissues. Acts by promoting endocytosis and degradation of ferroportin/SLC40A1, leading to the retention of iron in iron-exporting cells and decreased flow of iron into plasma. Controls the major flows of iron into plasma: absorption of dietary iron in the intestine, recycling of iron by macrophages, which phagocytose old erythrocytes and other cells, and mobilization of stored iron from hepatocytes. Functionally, has strong antimicrobial activity against E.coli ML35P N.cinerea and weaker against S.epidermidis, S.aureus and group b streptococcus bacteria. Active against the fungus C.albicans. No activity against P.aeruginosa. This Pongo abelii (Sumatran orangutan) protein is Hepcidin (HAMP).